Consider the following 293-residue polypeptide: Probable mediator of RNA polymerase II transcription subunit 15b (293 aa).

This sequence belongs to the plant Mediator complex subunit 15 family. As to quaternary structure, component of the Mediator complex.

Its subcellular location is the nucleus. In terms of biological role, component of the Mediator complex, a coactivator involved in the regulated transcription of nearly all RNA polymerase II-dependent genes. Mediator functions as a bridge to convey information from gene-specific regulatory proteins to the basal RNA polymerase II transcription machinery. The Mediator complex, having a compact conformation in its free form, is recruited to promoters by direct interactions with regulatory proteins and serves for the assembly of a functional preinitiation complex with RNA polymerase II and the general transcription factors. The protein is Probable mediator of RNA polymerase II transcription subunit 15b (MED15B) of Arabidopsis thaliana (Mouse-ear cress).